A 267-amino-acid chain; its full sequence is Levodione reductase (267 aa).

17 to 42 (LITGGGSGLGRATAVRLAAEGAKLSL) lines the NAD(+) pocket. Substrate is bound at residue S152. Catalysis depends on Y165, which acts as the Proton acceptor.

The protein belongs to the short-chain dehydrogenases/reductases (SDR) family.

It carries out the reaction (4R)-hydroxy-(6R)-2,2,6-trimethylcyclohexanone + NAD(+) = (6R)-2,2,6-trimethyl-1,4-cyclohexanedione + NADH + H(+). Strongly activated by monovalent cations, such as K(+), Na(+), and NH4(+). Catalyzes the regio- and stereoselective reversible NAD-dependent reduction of (6R)-2,2,6-trimethyl-1,4-cyclohexanedione (levodione) to (4R,6R)-4-hydroxy-2,2,6-trimethylcyclohexanone (actinol). The chain is Levodione reductase (lvr) from Leifsonia aquatica (Corynebacterium aquaticum).